The chain runs to 828 residues: Calpain-A (828 aa).

An EF-hand 1 domain is found at 1–14; it reads MDDLRGFLRQAGQE. The Calpain catalytic domain maps to 88-387; sequence LFEDPLFPAS…FDRVEICNLS (300 aa). Residues Cys143, His299, and Asn327 contribute to the active site. The segment at 388–557 is domain III; that stretch reads PDSLTEDQQN…TQNNMEENDD (170 aa). The segment at 558 to 577 is linker; the sequence is HVGYGGKADTITPGFPTPKP. Residues 578–828 are domain IV; it reads IDPQKEGLRR…EEWIERTIYS (251 aa). EF-hand domains follow at residues 579-614, 699-734, 729-764, and 764-799; these read DPQK…SMRD, FSKD…IAKW, SEIA…AGYH, and HLNN…IKTY. Positions 712, 714, 716, 718, 723, 742, 746, 748, and 753 each coordinate Ca(2+).

The protein belongs to the peptidase C2 family. Post-translationally, undergoes calcium-dependent autolytic cleavage between Lys-54 and Asn-55, which is necessary for activation of the protein. Localized to the anterior and posterior embryonic poles just after fertilization. Becomes distributed around the polar buds and just below the pole cells of the posterior pole during cleavage cycles. During these nuclear divisions anterior localization disappears. Localized to actin caps that underlie the plasma membrane, immediately above each nucleus at cleavage cycles 8 and 9. Localized to a small set of nerve, midgut and blood cells in adults.

It localises to the cytoplasm. With respect to regulation, activated by millimolar concentrations of calcium, and by phosphatidylinositol 4,5-diphosphate, phosphatidylinositol 4-monophosphate, phosphatidylinositol and phosphatidic acid. Its function is as follows. Calcium-regulated non-lysosomal thiol-protease. Involved in the organization of the actin-related cytoskeleton during embryogenesis. The sequence is that of Calpain-A (CalpA) from Drosophila melanogaster (Fruit fly).